A 554-amino-acid polypeptide reads, in one-letter code: (E)-beta-caryophyllene synthase (554 aa).

Aspartate 313 and aspartate 317 together coordinate Mn(2+). Positions 313 to 317 match the DDXXD motif motif; that stretch reads DDIYD. Homodimerization regions lie at residues 319–325 and 391–427; these read YGTLDEL and EAQW…LAVI. Mn(2+) contacts are provided by aspartate 457 and glutamate 465.

It belongs to the terpene synthase family. As to quaternary structure, homodimer. Requires Mn(2+) as cofactor. It depends on Mg(2+) as a cofactor. In terms of tissue distribution, expressed in peltate glandular trichomes. Present at low levels in flowers, leaves and stems.

It carries out the reaction (2E,6E)-farnesyl diphosphate = (-)-(E)-beta-caryophyllene + diphosphate. It catalyses the reaction (2E,6E)-farnesyl diphosphate = alpha-humulene + diphosphate. It functions in the pathway secondary metabolite biosynthesis; terpenoid biosynthesis. In terms of biological role, involved in the biosynthesis of phenolic sesquiterpenes natural products. Sesquiterpene synthase converting (2E,6E)-farnesyl diphosphate (FPP) to (E)-beta-caryophyllene and alpha-humulene. The protein is (E)-beta-caryophyllene synthase of Origanum vulgare (Wild marjoram).